A 487-amino-acid polypeptide reads, in one-letter code: Malonate-semialdehyde dehydrogenase (487 aa).

NAD(+)-binding residues include A150, F152, K176, E179, R180, S229, and T251. Catalysis depends on C284, which acts as the Nucleophile. E382 is an NAD(+) binding site.

It belongs to the aldehyde dehydrogenase family. IolA subfamily. Homotetramer.

The enzyme catalyses 3-oxopropanoate + NAD(+) + CoA + H2O = hydrogencarbonate + acetyl-CoA + NADH + H(+). It catalyses the reaction 2-methyl-3-oxopropanoate + NAD(+) + CoA + H2O = propanoyl-CoA + hydrogencarbonate + NADH + H(+). The protein operates within polyol metabolism; myo-inositol degradation into acetyl-CoA; acetyl-CoA from myo-inositol: step 7/7. Functionally, catalyzes the oxidation of malonate semialdehyde (MSA) and methylmalonate semialdehyde (MMSA) into acetyl-CoA and propanoyl-CoA, respectively. Is involved in a myo-inositol catabolic pathway. Bicarbonate, and not CO2, is the end-product of the enzymatic reaction. This is Malonate-semialdehyde dehydrogenase from Bacillus velezensis (strain DSM 23117 / BGSC 10A6 / LMG 26770 / FZB42) (Bacillus amyloliquefaciens subsp. plantarum).